A 121-amino-acid polypeptide reads, in one-letter code: Small ribosomal subunit protein uS13 (121 aa).

The tract at residues 90–121 (RHRHGLPVRGQHTKNNARTRKGKAVAIAGKKK) is disordered.

It belongs to the universal ribosomal protein uS13 family. As to quaternary structure, part of the 30S ribosomal subunit. Forms a loose heterodimer with protein S19. Forms two bridges to the 50S subunit in the 70S ribosome.

Functionally, located at the top of the head of the 30S subunit, it contacts several helices of the 16S rRNA. In the 70S ribosome it contacts the 23S rRNA (bridge B1a) and protein L5 of the 50S subunit (bridge B1b), connecting the 2 subunits; these bridges are implicated in subunit movement. Contacts the tRNAs in the A and P-sites. The protein is Small ribosomal subunit protein uS13 of Limosilactobacillus fermentum (strain NBRC 3956 / LMG 18251) (Lactobacillus fermentum).